The primary structure comprises 173 residues: Alpha-crystallin A chain (173 aa).

Residue methionine 1 is modified to N-acetylmethionine. In terms of domain architecture, sHSP spans 53-164; that stretch reads NFLDSSNSGM…GDRSIPVTRD (112 aa). Residues histidine 101, glutamate 103, and histidine 108 each coordinate Zn(2+). Cysteine 132 and cysteine 143 are disulfide-bonded. Residues 143–173 form a disordered region; sequence CGPKSGGSESGRGDRSIPVTRDDKTNSTPSS. Basic and acidic residues predominate over residues 153–167; sequence GRGDRSIPVTRDDKT.

It belongs to the small heat shock protein (HSP20) family. Heteropolymer composed of three CRYAA and one CRYAB subunits. Inter-subunit bridging via zinc ions enhances stability, which is crucial as there is no protein turn over in the lens. Zinc coordination is achieved at least by His-101, Glu-103 and His-108. His-101 and Glu-103 come from the same molecule within the oligomer, while His-108 residue is provided by another molecule. Can also form homodimers and homotetramers (dimers of dimers) which serve as the building blocks of homooligomers. Part of a complex required for lens intermediate filament formation composed of BFSP1, BFSP2 and CRYAA.

The protein localises to the cytoplasm. The protein resides in the nucleus. Contributes to the transparency and refractive index of the lens. May act as a chaperone, preventing aggregation of various proteins under a wide range of stress conditions. The polypeptide is Alpha-crystallin A chain (cryaa) (Psalidodon fasciatus (Banded astyanax)).